The following is a 245-amino-acid chain: Glutathione S-transferase F4 (245 aa).

The 82-residue stretch at 25–106 folds into the GST N-terminal domain; the sequence is AGYKVHGDPF…YIAYVHSSRG (82 aa). Residues 35–36, 64–65, 77–78, and 90–91 each bind glutathione; these read ST, HK, QV, and ES. The GST C-terminal domain occupies 114-244; it reads SHETMATLTM…QEKSWFNKPR (131 aa).

Belongs to the GST superfamily. Phi family.

The protein localises to the cytoplasm. It is found in the cytosol. It carries out the reaction RX + glutathione = an S-substituted glutathione + a halide anion + H(+). Functionally, may be involved in the conjugation of reduced glutathione to a wide number of exogenous and endogenous hydrophobic electrophiles and have a detoxification role against certain herbicides. This Arabidopsis thaliana (Mouse-ear cress) protein is Glutathione S-transferase F4 (GSTF4).